We begin with the raw amino-acid sequence, 110 residues long: Large ribosomal subunit protein uL22 (110 aa).

It belongs to the universal ribosomal protein uL22 family. Part of the 50S ribosomal subunit.

Its function is as follows. This protein binds specifically to 23S rRNA; its binding is stimulated by other ribosomal proteins, e.g. L4, L17, and L20. It is important during the early stages of 50S assembly. It makes multiple contacts with different domains of the 23S rRNA in the assembled 50S subunit and ribosome. Functionally, the globular domain of the protein is located near the polypeptide exit tunnel on the outside of the subunit, while an extended beta-hairpin is found that lines the wall of the exit tunnel in the center of the 70S ribosome. This Shewanella amazonensis (strain ATCC BAA-1098 / SB2B) protein is Large ribosomal subunit protein uL22.